The primary structure comprises 273 residues: MVNAVKQIPTFLNDGANAIEADITFKGAVPTYSYHGTPCDFGRDCIRWEYFNVFLQTLRDYTTPGNSKYREKFILFVLDLKTGSLNNHEVRKAGENVAKGLLENYWNNGNNGGRAYVVLSLPDIAHYEFIRTFKEVLKTKGHENLLDKVGYDLSGPYWPSLPSLDSVHEAFKKAGVDGHVWLSDGLTNWAALDDMARLKQIVERRDSENGFISKVYYWSVDKYSTTRTALEVGVDGIMTNYPYVIIDVLNEAKYKDKYRLATYDDNPWETFKN.

Mg(2+) contacts are provided by Glu-20 and Asp-22. The active-site Nucleophile is His-35. Cys-39 and Cys-45 are joined by a disulfide. Asp-79 contacts Mg(2+).

The protein belongs to the arthropod phospholipase D family. Class I subfamily. Requires Mg(2+) as cofactor. As to expression, expressed by the venom gland.

The protein resides in the secreted. It catalyses the reaction an N-(acyl)-sphingosylphosphocholine = an N-(acyl)-sphingosyl-1,3-cyclic phosphate + choline. The enzyme catalyses an N-(acyl)-sphingosylphosphoethanolamine = an N-(acyl)-sphingosyl-1,3-cyclic phosphate + ethanolamine. The catalysed reaction is a 1-acyl-sn-glycero-3-phosphocholine = a 1-acyl-sn-glycero-2,3-cyclic phosphate + choline. It carries out the reaction a 1-acyl-sn-glycero-3-phosphoethanolamine = a 1-acyl-sn-glycero-2,3-cyclic phosphate + ethanolamine. Functionally, dermonecrotic toxins cleave the phosphodiester linkage between the phosphate and headgroup of certain phospholipids (sphingolipid and lysolipid substrates), forming an alcohol (often choline) and a cyclic phosphate. This toxin acts on sphingomyelin (SM). It may also act on ceramide phosphoethanolamine (CPE), lysophosphatidylcholine (LPC) and lysophosphatidylethanolamine (LPE), but not on lysophosphatidylserine (LPS), and lysophosphatidylglycerol (LPG). It acts by transphosphatidylation, releasing exclusively cyclic phosphate products as second products. Induces dermonecrosis, hemolysis, increased vascular permeability, edema, inflammatory response, and platelet aggregation. The chain is Dermonecrotic toxin from Loxosceles laeta (South American recluse spider).